A 587-amino-acid polypeptide reads, in one-letter code: Xyloglucan-specific endo-beta-1,4-glucanase BoGH9A (587 aa).

Positions 1 to 19 are cleaved as a signal peptide; sequence MKIVRYIALFGILSGLAVA. Residue cysteine 20 is the site of N-palmitoyl cysteine attachment. Cysteine 20 carries the S-diacylglycerol cysteine lipid modification. Catalysis depends on aspartate 185, which acts as the Nucleophile. Catalysis depends on residues histidine 511 and aspartate 553. Glutamate 562 acts as the Proton donor in catalysis.

This sequence belongs to the glycosyl hydrolase 9 (cellulase E) family.

It is found in the cell outer membrane. It catalyses the reaction xyloglucan + H2O = xyloglucan oligosaccharides.. Its pathway is glucan metabolism; xyloglucan degradation. Its function is as follows. Catalyzes endohydrolysis of 1,4-beta-D-glucosidic linkages in xyloglucan with retention of the beta-configuration of the glycosyl residues in xyloglucan degradation. Cleaves the backbone of the 3 major types of natural xyloglucans (seed galactoxyloglucan from tamarind kernel, dicot fucogalactoxyloglucan from lettuce leaves, and solanaceous arabinogalactoxyloglucan from tomato fruit), to produce xyloglucan oligosaccharides. May be superfluous in xyloglucan degradation compared to BoGH5A (AC A7LXT7), the other Xyloglucan-specific endo-beta-1,4-glucanase. This is Xyloglucan-specific endo-beta-1,4-glucanase BoGH9A from Bacteroides ovatus (strain ATCC 8483 / DSM 1896 / JCM 5824 / BCRC 10623 / CCUG 4943 / NCTC 11153).